The following is a 115-amino-acid chain: WMMIVEQKCRVIVMLAKCFEAGKKKCQKYWPDSKEAKTFGRVKVFNAEEVKYCGFLRRRFYIDSFDEMMSVEVFQYQYINWPDHSVPNTTSNLVRMHKYVIQCLEETGSDAPMVV.

In terms of domain architecture, Tyrosine-protein phosphatase spans 1 to 115 (WMMIVEQKCR…ETGSDAPMVV (115 aa)). Substrate is bound at residue Asp83.

It belongs to the protein-tyrosine phosphatase family.

It catalyses the reaction O-phospho-L-tyrosyl-[protein] + H2O = L-tyrosyl-[protein] + phosphate. In Styela plicata (Wrinkled sea squirt), this protein is Tyrosine-protein phosphatase 24 (STY-24).